A 216-amino-acid chain; its full sequence is Adenylate kinase (216 aa).

10 to 15 contributes to the ATP binding site; the sequence is GAGKGT. Residues 30–59 form an NMP region; the sequence is STGDMLRAAVKAGTPLGLELKKVMDAGQLV. AMP is bound by residues T31, R36, 57-59, 85-88, and Q92; these read QLV and GFPR. The interval 122–159 is LID; sequence GRRVHLASGRTYHIQYNPPKVEGKDDETGEDLIQRDDD. Residues R123 and 132–133 contribute to the ATP site; that span reads TY. AMP contacts are provided by R156 and R167. G202 serves as a coordination point for ATP.

The protein belongs to the adenylate kinase family. In terms of assembly, monomer.

The protein resides in the cytoplasm. It carries out the reaction AMP + ATP = 2 ADP. It functions in the pathway purine metabolism; AMP biosynthesis via salvage pathway; AMP from ADP: step 1/1. Functionally, catalyzes the reversible transfer of the terminal phosphate group between ATP and AMP. Plays an important role in cellular energy homeostasis and in adenine nucleotide metabolism. The chain is Adenylate kinase from Pseudomonas putida (strain ATCC 700007 / DSM 6899 / JCM 31910 / BCRC 17059 / LMG 24140 / F1).